Here is a 336-residue protein sequence, read N- to C-terminus: Hdr-like menaquinol oxidoreductase cytochrome b-like subunit (336 aa).

The next 6 helical transmembrane spans lie at 4-24 (ALYI…IGTI), 60-80 (IDSP…VFLF), 102-122 (WLWL…IRHL), 145-165 (VAIV…LAFL), 184-204 (HLIL…RYII), and 232-252 (LHWL…YIPF).

Its subcellular location is the cell membrane. Functionally, has menaquinol-oxidizing activity. The HmeC and HmeD subunits may together mediate electron transfer from menaquinol to an unidentified electron acceptor on the cytoplasmic side of the membrane. This is Hdr-like menaquinol oxidoreductase cytochrome b-like subunit (hmeC) from Archaeoglobus profundus (strain DSM 5631 / JCM 9629 / NBRC 100127 / Av18).